Consider the following 518-residue polypeptide: Glutamate--cysteine ligase (518 aa).

It belongs to the glutamate--cysteine ligase type 1 family. Type 1 subfamily.

It carries out the reaction L-cysteine + L-glutamate + ATP = gamma-L-glutamyl-L-cysteine + ADP + phosphate + H(+). It functions in the pathway sulfur metabolism; glutathione biosynthesis; glutathione from L-cysteine and L-glutamate: step 1/2. This is Glutamate--cysteine ligase from Shigella sonnei (strain Ss046).